Reading from the N-terminus, the 361-residue chain is Polygalacturonase (361 aa).

An N-terminal signal peptide occupies residues 1–18 (MISANSLLISTLCAFAIA). Cys-27 and Cys-43 are joined by a disulfide. 5 PbH1 repeats span residues 155–185 (CSDL…DVGS), 186–207 (SSNV…AVNS), 208–228 (GSTI…SVGS), 237–258 (VNGF…RIKT), and 266–288 (VTNV…VIEG). Catalysis depends on Asp-200, which acts as the Proton donor. Cysteines 202 and 218 form a disulfide. His-222 is an active-site residue. Asn-318 and Asn-330 each carry an N-linked (GlcNAc...) asparagine glycan. Cys-350 and Cys-361 are joined by a disulfide.

Belongs to the glycosyl hydrolase 28 family.

It carries out the reaction (1,4-alpha-D-galacturonosyl)n+m + H2O = (1,4-alpha-D-galacturonosyl)n + (1,4-alpha-D-galacturonosyl)m.. In Saccharomyces cerevisiae (strain ATCC 204508 / S288c) (Baker's yeast), this protein is Polygalacturonase (PGU1).